The chain runs to 149 residues: Calmodulin-2 (149 aa).

EF-hand domains follow at residues 8–43 (DQIS…LGQN), 44–79 (PTEA…KMKD), 81–116 (DSEE…LGEK), and 117–149 (LTDE…MMAK). Residues Asp21, Asp23, Asp25, Cys27, Glu32, Asp57, Asp59, Asn61, Thr63, Glu68, Asp94, Asp96, Asn98, Glu105, Asp130, Asp132, Asp134, Gln136, and Glu141 each coordinate Ca(2+).

The protein belongs to the calmodulin family. In terms of assembly, interacts with KCBP and CIP111. Binds to IQD1 and IQD20.

It localises to the cytoplasm. The protein localises to the cytoskeleton. In terms of biological role, calmodulin mediates the control of a large number of enzymes, ion channels and other proteins by Ca(2+). Among the enzymes to be stimulated by the calmodulin-Ca(2+) complex are a number of protein kinases and phosphatases. In Arabidopsis thaliana (Mouse-ear cress), this protein is Calmodulin-2 (CAM2).